The sequence spans 310 residues: Polyprenyl transferase ntnF (310 aa).

8 consecutive transmembrane segments (helical) span residues 30 to 50 (HTPE…FYAI), 63 to 83 (FLGI…WNDI), 110 to 130 (AMVA…AMLG), 154 to 174 (IWAP…PPWV), 185 to 205 (LPAS…LIYA), 230 to 250 (ACLT…AFEA), 255 to 275 (FLWV…ILSL), and 286 to 306 (IFLV…TDVW).

The protein belongs to the UbiA prenyltransferase family. The cofactor is Mg(2+).

Its subcellular location is the membrane. It participates in secondary metabolite biosynthesis; terpenoid biosynthesis. Its function is as follows. olyprenyl transferase; part of the gene cluster that mediates the biosynthesis of the meroterpenoids nectripenoids A and B, as well as cochliquninone D and isocochliquninone E. The pathway probably begins with the HR-PKS ntnH that catalyzes two chain-extension steps to form a reduced triketide, which then primes the SAT domain in the NR-PKS ntnG to initiate three more cycles of extension to give a linear hexaketide corresponding to the polyketide part of nectripenoids. The FAD-dependent monooxygenase ntnJ then performs an oxidative decarboxylation at C11 of the ntnH/ntnG product, via an electrophilic aromatic hydroxylation with concomitant ipso-decarboxylation. The membrane-bound polyprenyl transferase ntnF then introduces a farnesyl group before the FAD-dependent monooxygenase ntnK functions as the first epoxidase on terminal C12'-C13' olefin, followed by a second epoxidation on C7'-C8' catalyzed by ntnA. The terpene cyclase/mutase ntnI then initiates the sequential tricyclic ring formation through protonation of the terminal epoxide and catalyzes the regioselective and stereoselective 6/6/6-tricyclic ring formation. The cytochrome P450 monooxygenase ntnM may then hydroxylate C1'. In Nectria sp, this protein is Polyprenyl transferase ntnF.